A 190-amino-acid chain; its full sequence is GTP cyclohydrolase 1 (190 aa).

Zn(2+) is bound by residues C75, H78, and C146.

It belongs to the GTP cyclohydrolase I family. Homomer.

The enzyme catalyses GTP + H2O = 7,8-dihydroneopterin 3'-triphosphate + formate + H(+). Its pathway is cofactor biosynthesis; 7,8-dihydroneopterin triphosphate biosynthesis; 7,8-dihydroneopterin triphosphate from GTP: step 1/1. This chain is GTP cyclohydrolase 1, found in Campylobacter lari (strain RM2100 / D67 / ATCC BAA-1060).